Here is a 335-residue protein sequence, read N- to C-terminus: Peflin (335 aa).

The segment covering 23-37 has biased composition (basic and acidic residues); it reads AMEETRREFEKEKQR. The disordered stretch occupies residues 23-92; it reads AMEETRREFE…SPRHTKTPVD (70 aa). Over residues 43 to 53 the composition is skewed to polar residues; that stretch reads VTQAQTPNTRV. EF-hand domains are found at residues 144 to 192, 198 to 223, 224 to 259, 260 to 300, and 301 to 332; these read KVAP…DDNS, SVDA…IALY, KRVK…LGYL, IPFE…LMRL, and TKLF…LGRF. 3 residues coordinate Ca(2+): Asp-170, Arg-176, and Glu-181. Ca(2+) contacts are provided by Asp-237, Asn-239, Ser-241, Thr-243, and Glu-248.

As to quaternary structure, homodimer.

It is found in the cytoplasm. The protein localises to the nucleus. It localises to the bud tip. The protein resides in the bud neck. Calcium-binding protein that is required for polar bud growth and cell wall abscission. Can also bind zinc ions. This is Peflin (PEF1) from Saccharomyces cerevisiae (strain ATCC 204508 / S288c) (Baker's yeast).